Reading from the N-terminus, the 115-residue chain is Non-specific lipid-transfer protein Cw18 (115 aa).

Residues 1 to 25 (MARTAATKLALVALVAAMLLVAADA) form the signal peptide. 4 disulfides stabilise this stretch: cysteine 29-cysteine 77, cysteine 39-cysteine 54, cysteine 55-cysteine 97, and cysteine 75-cysteine 111.

It belongs to the plant LTP family. Highly expressed in leaves and coleoptiles. No expression in roots.

Plant non-specific lipid-transfer proteins transfer phospholipids as well as galactolipids across membranes. May play a role in wax or cutin deposition in the cell walls of expanding epidermal cells and certain secretory tissues. The chain is Non-specific lipid-transfer protein Cw18 (CW18) from Hordeum vulgare (Barley).